A 415-amino-acid polypeptide reads, in one-letter code: Casein kinase I isoform delta (415 aa).

The Protein kinase domain maps to 9–277; sequence YRLGRKIGSG…YLRQLFRNLF (269 aa). ATP-binding positions include 15 to 23 and K38; that span reads IGSGSFGDI. The active-site Proton acceptor is the D128. The centrosomal localization signal (CLS) stretch occupies residues 278–364; the sequence is HRQGFSYDYV…TSPRPVSGME (87 aa). Over residues 301-315 the composition is skewed to basic and acidic residues; that stretch reads ADDAERERRDREERL. The tract at residues 301 to 415 is disordered; sequence ADDAERERRD…SSGLQSVVHR (115 aa). The segment at 317–342 is autoinhibitory; it reads HSRNPATRGLPSTASGRLRGTQEVAP. Phosphoserine is present on residues S328 and S331. Over residues 347–358 the composition is skewed to polar residues; the sequence is TPTSHTANTSPR. Position 370 is a phosphoserine (S370). At R375 the chain carries Omega-N-methylarginine. Residues 380 to 400 are compositionally biased toward polar residues; sequence NISSSDLTGRQDTSRMSTSQI. 5 positions are modified to phosphoserine: S382, S383, S384, S407, and S411.

The protein belongs to the protein kinase superfamily. CK1 Ser/Thr protein kinase family. Casein kinase I subfamily. Monomer. Component of the circadian core oscillator, which includes the CRY proteins, CLOCK, or NPAS2, ARTNL/BMAL1 or ARTNL2/BMAL2, CSNK1D and/or CSNK1E, TIMELESS and the PER proteins. Interacts with DNMT1 and MAP1A. Interacts directly with PER1 and PER2 which may lead to their degradation. Interacts with MAPT/TAU, SNAPIN, DBNDD2, AIB1/NCOA3 and ESR1. Interacts with AKAP9/AKAP450; this interaction promotes centrosomal subcellular location. Binds to tubulins in mitotic cells upon DNA damage. Interacts with GJA1. Interacts with DDX3X; this interaction enhances CSNK1D kinase activity in vitro, but it is unclear whether this interaction is physiologically relevant. Interacts with FAM83A, FAM83B, FAM83E and FAM83H (via DUF1669). Autophosphorylated on serine and threonine residues; this autophosphorylation represses activity. Reactivated by phosphatase-mediated dephosphorylation. May be dephosphorylated by PP1.

Its subcellular location is the cytoplasm. The protein localises to the nucleus. The protein resides in the cytoskeleton. It is found in the microtubule organizing center. It localises to the centrosome. Its subcellular location is the perinuclear region. The protein localises to the cell membrane. The protein resides in the spindle. It is found in the golgi apparatus. It carries out the reaction L-seryl-[protein] + ATP = O-phospho-L-seryl-[protein] + ADP + H(+). The catalysed reaction is L-threonyl-[protein] + ATP = O-phospho-L-threonyl-[protein] + ADP + H(+). It catalyses the reaction L-seryl-[tau protein] + ATP = O-phospho-L-seryl-[tau protein] + ADP + H(+). The enzyme catalyses L-threonyl-[tau protein] + ATP = O-phospho-L-threonyl-[tau protein] + ADP + H(+). Drug-mediated inhibition leads to a delay of the oscillations with the magnitude of this effect dependent upon the timing of drug administration. Inhibited by phosphorylation. Exhibits substrate-dependent heparin activation. Its function is as follows. Essential serine/threonine-protein kinase that regulates diverse cellular growth and survival processes including Wnt signaling, DNA repair and circadian rhythms. It can phosphorylate a large number of proteins. Casein kinases are operationally defined by their preferential utilization of acidic proteins such as caseins as substrates. Phosphorylates connexin-43/GJA1, MAP1A, SNAPIN, MAPT/TAU, TOP2A, DCK, HIF1A, EIF6, p53/TP53, DVL2, DVL3, ESR1, AIB1/NCOA3, DNMT1, PKD2, YAP1, PER1 and PER2. Central component of the circadian clock. In balance with PP1, determines the circadian period length through the regulation of the speed and rhythmicity of PER1 and PER2 phosphorylation. Controls PER1 and PER2 nuclear transport and degradation. YAP1 phosphorylation promotes its SCF(beta-TRCP) E3 ubiquitin ligase-mediated ubiquitination and subsequent degradation. DNMT1 phosphorylation reduces its DNA-binding activity. Phosphorylation of ESR1 and AIB1/NCOA3 stimulates their activity and coactivation. Phosphorylation of DVL2 and DVL3 regulates WNT3A signaling pathway that controls neurite outgrowth. Phosphorylates NEDD9/HEF1. EIF6 phosphorylation promotes its nuclear export. Triggers down-regulation of dopamine receptors in the forebrain. Activates DCK in vitro by phosphorylation. TOP2A phosphorylation favors DNA cleavable complex formation. May regulate the formation of the mitotic spindle apparatus in extravillous trophoblast. Modulates connexin-43/GJA1 gap junction assembly by phosphorylation. Probably involved in lymphocyte physiology. Regulates fast synaptic transmission mediated by glutamate. The protein is Casein kinase I isoform delta (CSNK1D) of Bos taurus (Bovine).